A 249-amino-acid chain; its full sequence is Triosephosphate isomerase (249 aa).

Position 9–11 (Asn-9–Lys-11) interacts with substrate. The Electrophile role is filled by His-91. Catalysis depends on Glu-163, which acts as the Proton acceptor. Residues Gly-169, Ser-209, and Gly-230 to Gly-231 contribute to the substrate site.

This sequence belongs to the triosephosphate isomerase family. In terms of assembly, homodimer.

The protein localises to the cytoplasm. The catalysed reaction is D-glyceraldehyde 3-phosphate = dihydroxyacetone phosphate. It functions in the pathway carbohydrate biosynthesis; gluconeogenesis. Its pathway is carbohydrate degradation; glycolysis; D-glyceraldehyde 3-phosphate from glycerone phosphate: step 1/1. Functionally, involved in the gluconeogenesis. Catalyzes stereospecifically the conversion of dihydroxyacetone phosphate (DHAP) to D-glyceraldehyde-3-phosphate (G3P). The polypeptide is Triosephosphate isomerase (Halorhodospira halophila (strain DSM 244 / SL1) (Ectothiorhodospira halophila (strain DSM 244 / SL1))).